Here is a 161-residue protein sequence, read N- to C-terminus: MSDDHHDDEHFHTGDSGAAATFPKQCSALRKNEHVMIKGRPCKIVEMSTSKTGKHGHAKVHMVAIDIFTSKKLEDICPSTHNMDVPVVKRREYLLMAIDDGYCSLMDPESCEQKDDLKLPDTELGQQIRDAYEKDEGSVLVQVVSAIGEEAILGWKVSTKE.

A Hypusine modification is found at Lys54.

It belongs to the eIF-5A family. In terms of processing, lys-54 undergoes hypusination, a unique post-translational modification that consists in the addition of a butylamino group from spermidine to lysine side chain and leads to the formation of a hypusine residue. eIF-5As are the only known proteins to undergo this modification, which is essential for their function. As to expression, expressed in the somatic tissues.

The protein localises to the cytoplasm. Functionally, translation factor that promotes translation elongation and termination, particularly upon ribosome stalling at specific amino acid sequence contexts. Binds between the exit (E) and peptidyl (P) site of the ribosome and promotes rescue of stalled ribosome: specifically required for efficient translation of polyproline-containing peptides as well as other motifs that stall the ribosome. Acts as a ribosome quality control (RQC) cofactor by joining the RQC complex to facilitate peptidyl transfer during CAT tailing step. Acts in somatic tissues and its function in the soma is essential for normal growth and reproduction. This Caenorhabditis elegans protein is Eukaryotic translation initiation factor 5A-2 (iff-2).